We begin with the raw amino-acid sequence, 573 residues long: Poly(ribitol-phosphate) beta-N-acetylglucosaminyltransferase TarS (573 aa).

Residues P9, D41, N68, R76, 92–94 (DSD), R127, and E178 each bind UDP-N-acetyl-alpha-D-glucosamine. D94 contacts Mn(2+). Residue D179 is the Proton acceptor of the active site. UDP-N-acetyl-alpha-D-glucosamine-binding positions include R207 and 211 to 213 (HMS).

It belongs to the glycosyltransferase 2 family. Homotrimer. Requires Mn(2+) as cofactor.

The catalysed reaction is 4-O-[(D-ribitylphospho)(n)-di{(2R)-glycerylphospho}]-N-acetyl-beta-D-mannosaminyl-(1-&gt;4)-N-acetyl-alpha-D-glucosaminyl di-trans,octa-cis-undecaprenyl diphosphate + n UDP-N-acetyl-alpha-D-glucosamine = 4-O-([2-N-acetyl-beta-D-glucosaminyl-1-D-ribitylphospho](n)-di{[2R]-1-glycerylphospho})-N-acetyl-beta-D-mannosaminyl-(1-&gt;4)-N-acetyl-alpha-D-glucosaminyl di-trans,octa-cis-undecaprenyl diphosphate + n UDP + n H(+). Its pathway is cell wall biogenesis; poly(ribitol phosphate) teichoic acid biosynthesis. Its function is as follows. Attaches beta-O-GlcNAc (beta-O-N-acetyl-D-glucosamine) residues to the C4 position of poly(RboP)-wall teichoic acids (WTAs). Mediates beta-lactam resistance in methicillin resistant Staphylococcus aureus (MRSA) strains. The sequence is that of Poly(ribitol-phosphate) beta-N-acetylglucosaminyltransferase TarS from Staphylococcus aureus (strain Mu50 / ATCC 700699).